The sequence spans 768 residues: Cullin-3-A (768 aa).

Positions 677 to 698 are disordered; it reads VAAKQGESDPERKETRQKVDDD. The segment covering 682-698 has biased composition (basic and acidic residues); it reads GESDPERKETRQKVDDD. In terms of domain architecture, Cullin neddylation spans 698–760; the sequence is DRKHEIEAAI…REYLARTPED (63 aa). Lys712 is covalently cross-linked (Glycyl lysine isopeptide (Lys-Gly) (interchain with G-Cter in NEDD8)).

This sequence belongs to the cullin family. As to quaternary structure, component of multiple BCR (BTB-CUL3-RBX1) E3 ubiquitin-protein ligase complexes formed of cul3, rbx1 and a variable BTB domain-containing protein acting as both, adapter to cullin and substrate recognition subunit. Interacts with btbd6. Post-translationally, neddylated. Attachment of NEDD8 is required for the E3 ubiquitin-protein ligase activity of the SCF-like complex.

It is found in the nucleus. It functions in the pathway protein modification; protein ubiquitination. Functionally, probable core component of cullin-based SCF-like E3 ubiquitin-protein ligase complexes which mediate the ubiquitination and subsequent proteasomal degradation of target proteins. The E3 ubiquitin-protein ligase activity of the complex is dependent on the neddylation of the cullin subunit. Involved in ER-Golgi transport by regulating the size of COPII coats, thereby playing a key role in collagen export, which is required for embryonic stem (ES) cells division. May play a role in the regulation of mittotic entry via ubiquitination of aurka. This chain is Cullin-3-A (cul3a), found in Xenopus laevis (African clawed frog).